The following is a 288-amino-acid chain: Sulfur carrier protein FdhD (288 aa).

The active-site Cysteine persulfide intermediate is the cysteine 122. A Mo-bis(molybdopterin guanine dinucleotide)-binding site is contributed by 268 to 273; that stretch reads FVRGER.

Belongs to the FdhD family.

The protein localises to the cytoplasm. In terms of biological role, required for formate dehydrogenase (FDH) activity. Acts as a sulfur carrier protein that transfers sulfur from IscS to the molybdenum cofactor prior to its insertion into FDH. This Anaeromyxobacter dehalogenans (strain 2CP-1 / ATCC BAA-258) protein is Sulfur carrier protein FdhD.